Consider the following 649-residue polypeptide: UvrABC system protein B (649 aa).

Residues 25–178 (EHYKDGIKEQ…EDILKELVKM (154 aa)) form the Helicase ATP-binding domain. 38 to 45 (GVTGSGKT) provides a ligand contact to ATP. Positions 91 to 114 (YYDYYQPEAYVAQTDTFIDKESAI) match the Beta-hairpin motif. Residues 428–594 (QVDDLLGEIR…SVVRKLKDKK (167 aa)) form the Helicase C-terminal domain. Positions 614–649 (DEIIKELEKEMKQAAKDLNFEKAAKLRDRIMELKEE) constitute a UVR domain.

Belongs to the UvrB family. As to quaternary structure, forms a heterotetramer with UvrA during the search for lesions. Interacts with UvrC in an incision complex.

Its subcellular location is the cytoplasm. Functionally, the UvrABC repair system catalyzes the recognition and processing of DNA lesions. A damage recognition complex composed of 2 UvrA and 2 UvrB subunits scans DNA for abnormalities. Upon binding of the UvrA(2)B(2) complex to a putative damaged site, the DNA wraps around one UvrB monomer. DNA wrap is dependent on ATP binding by UvrB and probably causes local melting of the DNA helix, facilitating insertion of UvrB beta-hairpin between the DNA strands. Then UvrB probes one DNA strand for the presence of a lesion. If a lesion is found the UvrA subunits dissociate and the UvrB-DNA preincision complex is formed. This complex is subsequently bound by UvrC and the second UvrB is released. If no lesion is found, the DNA wraps around the other UvrB subunit that will check the other stand for damage. The chain is UvrABC system protein B from Methanosphaera stadtmanae (strain ATCC 43021 / DSM 3091 / JCM 11832 / MCB-3).